The sequence spans 422 residues: ATP-dependent Clp protease ATP-binding subunit ClpX 1 (422 aa).

Positions 4–57 (DRKNRESGKLLYCSFCGKSQHEVRKLIAGPAVFVCDECVELCNDIIREDLQGSE) constitute a ClpX-type ZB domain. Cys16, Cys19, Cys38, and Cys41 together coordinate Zn(2+). Residue 120 to 127 (PTGSGKTL) participates in ATP binding.

It belongs to the ClpX chaperone family. Component of the ClpX-ClpP complex. Forms a hexameric ring that, in the presence of ATP, binds to fourteen ClpP subunits assembled into a disk-like structure with a central cavity, resembling the structure of eukaryotic proteasomes.

Functionally, ATP-dependent specificity component of the Clp protease. It directs the protease to specific substrates. Can perform chaperone functions in the absence of ClpP. The polypeptide is ATP-dependent Clp protease ATP-binding subunit ClpX 1 (Methylococcus capsulatus (strain ATCC 33009 / NCIMB 11132 / Bath)).